A 331-amino-acid chain; its full sequence is Light-harvesting complex I LH35 proteins (331 aa).

The protein localises to the plastid. The protein resides in the chloroplast. This Euglena gracilis protein is Light-harvesting complex I LH35 proteins.